The chain runs to 306 residues: Glutathione transport system permease protein GsiC (306 aa).

At 1–8 (MLNYVIKR) the chain is on the cytoplasmic side. A helical transmembrane segment spans residues 9–29 (LLGLIPTLFIVSVLVFLFVHM). At 30–102 (LPGDPARLIA…SRFMPTLWLT (73 aa)) the chain is on the periplasmic side. One can recognise an ABC transmembrane type-1 domain in the interval 95–292 (FMPTLWLTIT…LEFILINLVV (198 aa)). The helical transmembrane segment at 103–123 (ITSMVWAVIFGMAAGIIAAVW) threads the bilayer. Over 124–134 (RNRWPDRLSMT) the chain is Cytoplasmic. The chain crosses the membrane as a helical span at residues 135–155 (IAVSGISFPAFALGMLLIQVF). Topologically, residues 156-168 (SVELGWLPTVGAD) are periplasmic. The helical transmembrane segment at 169 to 189 (SWQHYILPSLTLGAAVAAVMA) threads the bilayer. The Cytoplasmic portion of the chain corresponds to 190 to 228 (RFTRASFVDVLSEDYMRTARAKGVSETWVVLKHGLRNAM). Residues 229–249 (IPVVTMMGLQFGFLLGGSIVV) form a helical membrane-spanning segment. Topologically, residues 250–277 (EKVFNWPGLGRLLVDSVEMRDYPVIQAE) are periplasmic. Residues 278-298 (ILLFSLEFILINLVVDVLYAA) traverse the membrane as a helical segment. Topologically, residues 299-306 (INPAIRYK) are cytoplasmic.

Belongs to the binding-protein-dependent transport system permease family. The complex is composed of two ATP-binding proteins (GsiA), two transmembrane proteins (GsiC and GsiD) and a solute-binding protein (GsiB).

The protein resides in the cell inner membrane. Part of the ABC transporter complex GsiABCD involved in glutathione import. Probably responsible for the translocation of the substrate across the membrane. This is Glutathione transport system permease protein GsiC from Escherichia coli O1:K1 / APEC.